Reading from the N-terminus, the 145-residue chain is D-aminoacyl-tRNA deacylase (145 aa).

A Gly-cisPro motif, important for rejection of L-amino acids motif is present at residues 137–138; that stretch reads GP.

Belongs to the DTD family. As to quaternary structure, homodimer.

The protein resides in the cytoplasm. The enzyme catalyses glycyl-tRNA(Ala) + H2O = tRNA(Ala) + glycine + H(+). It carries out the reaction a D-aminoacyl-tRNA + H2O = a tRNA + a D-alpha-amino acid + H(+). In terms of biological role, an aminoacyl-tRNA editing enzyme that deacylates mischarged D-aminoacyl-tRNAs. Also deacylates mischarged glycyl-tRNA(Ala), protecting cells against glycine mischarging by AlaRS. Acts via tRNA-based rather than protein-based catalysis; rejects L-amino acids rather than detecting D-amino acids in the active site. By recycling D-aminoacyl-tRNA to D-amino acids and free tRNA molecules, this enzyme counteracts the toxicity associated with the formation of D-aminoacyl-tRNA entities in vivo and helps enforce protein L-homochirality. The polypeptide is D-aminoacyl-tRNA deacylase (Pseudomonas syringae pv. tomato (strain ATCC BAA-871 / DC3000)).